The sequence spans 457 residues: ATP synthase subunit beta (457 aa).

Residue 147–154 (GGAGVGKT) participates in ATP binding.

It belongs to the ATPase alpha/beta chains family. F-type ATPases have 2 components, CF(1) - the catalytic core - and CF(0) - the membrane proton channel. CF(1) has five subunits: alpha(3), beta(3), gamma(1), delta(1), epsilon(1). CF(0) has three main subunits: a(1), b(2) and c(9-12). The alpha and beta chains form an alternating ring which encloses part of the gamma chain. CF(1) is attached to CF(0) by a central stalk formed by the gamma and epsilon chains, while a peripheral stalk is formed by the delta and b chains.

It localises to the cell inner membrane. It carries out the reaction ATP + H2O + 4 H(+)(in) = ADP + phosphate + 5 H(+)(out). In terms of biological role, produces ATP from ADP in the presence of a proton gradient across the membrane. The catalytic sites are hosted primarily by the beta subunits. The polypeptide is ATP synthase subunit beta (Histophilus somni (strain 129Pt) (Haemophilus somnus)).